The sequence spans 657 residues: Probable cytochrome P450 556A1 (657 aa).

The helical transmembrane segment at 2 to 24 (FLTSILYTIIIILIFYKGLEYLI) threads the bilayer. Positions 440–486 (RSLPSINNNNNNNNNNNNNNNNNNNNNNNNNSNNNSINGNNKNNNRN) are disordered. Over residues 446–486 (NNNNNNNNNNNNNNNNNNNNNNNNNSNNNSINGNNKNNNRN) the composition is skewed to low complexity. Position 587 (Cys-587) interacts with heme.

It belongs to the cytochrome P450 family. Heme serves as cofactor.

It localises to the membrane. This chain is Probable cytochrome P450 556A1 (cyp556A1), found in Dictyostelium discoideum (Social amoeba).